A 97-amino-acid polypeptide reads, in one-letter code: DNA/RNA-binding protein Alba (97 aa).

K15 is modified (N6-acetyllysine).

Belongs to the histone-like Alba family. In terms of processing, acetylated. Acetylation at Lys-15 decreases DNA-binding affinity.

Its subcellular location is the cytoplasm. The protein localises to the chromosome. Its function is as follows. Binds double-stranded DNA tightly but without sequence specificity. Involved in DNA compaction. This Sulfolobus acidocaldarius (strain ATCC 33909 / DSM 639 / JCM 8929 / NBRC 15157 / NCIMB 11770) protein is DNA/RNA-binding protein Alba.